The following is a 288-amino-acid chain: Lipoyl synthase (288 aa).

Residues Cys-39, Cys-44, Cys-50, Cys-65, Cys-69, Cys-72, and Ser-276 each coordinate [4Fe-4S] cluster. One can recognise a Radical SAM core domain in the interval 51-265; the sequence is WGKGTATFMI…KETGLKKGFE (215 aa).

It belongs to the radical SAM superfamily. Lipoyl synthase family. [4Fe-4S] cluster serves as cofactor.

Its subcellular location is the cytoplasm. It catalyses the reaction [[Fe-S] cluster scaffold protein carrying a second [4Fe-4S](2+) cluster] + N(6)-octanoyl-L-lysyl-[protein] + 2 oxidized [2Fe-2S]-[ferredoxin] + 2 S-adenosyl-L-methionine + 4 H(+) = [[Fe-S] cluster scaffold protein] + N(6)-[(R)-dihydrolipoyl]-L-lysyl-[protein] + 4 Fe(3+) + 2 hydrogen sulfide + 2 5'-deoxyadenosine + 2 L-methionine + 2 reduced [2Fe-2S]-[ferredoxin]. It functions in the pathway protein modification; protein lipoylation via endogenous pathway; protein N(6)-(lipoyl)lysine from octanoyl-[acyl-carrier-protein]: step 2/2. In terms of biological role, catalyzes the radical-mediated insertion of two sulfur atoms into the C-6 and C-8 positions of the octanoyl moiety bound to the lipoyl domains of lipoate-dependent enzymes, thereby converting the octanoylated domains into lipoylated derivatives. In Bacteroides fragilis (strain YCH46), this protein is Lipoyl synthase.